Consider the following 398-residue polypeptide: Pectate lyase 1 (398 aa).

The first 25 residues, 1–25 (MGIKHCCYILYFTLALVTLLQPVRS), serve as a signal peptide directing secretion. N-linked (GlcNAc...) asparagine glycosylation is present at N37. C55 and C72 are oxidised to a cystine. 3 residues coordinate Ca(2+): D195, D219, and D223. R275 is a catalytic residue.

It belongs to the polysaccharide lyase 1 family. Amb a subfamily. Monomer. Ca(2+) is required as a cofactor. The N-terminus is blocked. As to expression, pollen and flowers.

It carries out the reaction Eliminative cleavage of (1-&gt;4)-alpha-D-galacturonan to give oligosaccharides with 4-deoxy-alpha-D-galact-4-enuronosyl groups at their non-reducing ends.. The protein operates within glycan metabolism; pectin degradation; 2-dehydro-3-deoxy-D-gluconate from pectin: step 2/5. Has pectate lyase activity. This chain is Pectate lyase 1, found in Ambrosia artemisiifolia (Common ragweed).